The following is a 625-amino-acid chain: Baeyer-Villiger monooxygenase ATR8 (625 aa).

FAD is bound by residues aspartate 112, 120-123 (TWYW), aspartate 132, and tyrosine 138. 130–132 (QCD) serves as a coordination point for NADP(+). Residues 266–272 (TGATAIQ), 289–290 (RT), and 405–406 (KR) each bind NADP(+).

The protein belongs to the FAD-binding monooxygenase family. The cofactor is FAD.

It functions in the pathway mycotoxin biosynthesis. Baeyer-Villiger monooxygenase; part of the core atranone cluster (CAC) which products are predicted to catalyze most or all steps of mycotoxin atranone synthesis, starting from geranylgeranyl pyrophosphate (GGPP). The initial cyclization of GGPP to dolabellane is probably performed by the terpene cyclase ATR13. The Baeyer-Villiger oxidation near the end of the atranone synthesis, which converts atranones D and E to atranones F and G is predicted to be catalyzed by the monooxygenase ATR8. Of the CAC's other predicted gene products, the reducing PKS ATR6 might synthesize a polyketide chain. This polyketide is probably transferred onto the atranone backbone by the polyketide transferase ATR5. Other predicted CAC products include 4 oxygenases (ATR2, ATR3, ATR4, and ATR14), 3 short-chain reductases (ATR7, ATR9, and ATR10), and a methyltransferase (ATR12). These may all be involved in the various steps of atranone biosynthesis, although their specific roles must await experimental determination. The protein is Baeyer-Villiger monooxygenase ATR8 of Stachybotrys chlorohalonatus (strain IBT 40285).